A 215-amino-acid polypeptide reads, in one-letter code: Urease accessory protein UreF (215 aa).

It belongs to the UreF family. UreD, UreF and UreG form a complex that acts as a GTP-hydrolysis-dependent molecular chaperone, activating the urease apoprotein by helping to assemble the nickel containing metallocenter of UreC. The UreE protein probably delivers the nickel.

The protein resides in the cytoplasm. In terms of biological role, required for maturation of urease via the functional incorporation of the urease nickel metallocenter. This is Urease accessory protein UreF from Paracoccus denitrificans (strain Pd 1222).